The following is a 246-amino-acid chain: Probable transcriptional regulatory protein TM1040_1893 (246 aa).

A disordered region spans residues 1–21 (MAGHSKWANIQHRKGRQDAAR).

Belongs to the TACO1 family.

The protein localises to the cytoplasm. In Ruegeria sp. (strain TM1040) (Silicibacter sp.), this protein is Probable transcriptional regulatory protein TM1040_1893.